The following is an 886-amino-acid chain: Leucine-rich repeat-containing protein sog2 (886 aa).

LRR repeat units follow at residues 28–49, 53–74, 76–97, 99–120, 122–143, and 145–166; these read NALTLDLSHLNLRELPYEQLER, RIARLALGHNFIKSIGPEILKF, RLRYLNIRSNVLREFPESLCRL, SLEILDISRNKIKQLPESFGAL, NLKVLSISKNRLFELPTYIAHM, and NLEILKIENNHIVFPPPHIANN. Disordered regions lie at residues 236-288, 301-364, 394-431, and 455-483; these read SPGM…THPP, SPRQ…ASPI, PTQLSASAKTSAISLPEVAKKERNRSNSTNDDYSSTRL, and RIFAQDPHPSPRLKKEETHENGSNLTNDS. Residues 243–277 are compositionally biased toward polar residues; it reads VTPSPHSHSPAGHQQSTPKSTLSKTNENSEGTLYD. Ser-301 bears the Phosphoserine mark. Polar residues-rich tracts occupy residues 312 to 347, 394 to 406, and 419 to 431; these read SLATGLNSPSVSKPPSSATGPLYHSPQSSLTNSSVA, PTQLSASAKTSAI, and SNSTNDDYSSTRL. Ser-464 carries the phosphoserine modification.

It localises to the cytoplasm. The protein localises to the nucleus. In Schizosaccharomyces pombe (strain 972 / ATCC 24843) (Fission yeast), this protein is Leucine-rich repeat-containing protein sog2.